A 353-amino-acid chain; its full sequence is uncharacterized protein (353 aa).

The first 20 residues, 1–20, serve as a signal peptide directing secretion; the sequence is MLMRSVCFILLAVLLFSLSA. Cys21 is lipidated: N-palmitoyl cysteine. The S-diacylglycerol cysteine moiety is linked to residue Cys21.

The protein localises to the cell membrane. This is an uncharacterized protein from Bacillus subtilis (strain 168).